A 289-amino-acid chain; its full sequence is Splicing factor C9orf78 (289 aa).

Over residues M1–R12 the composition is skewed to basic residues. The tract at residues M1–V27 is disordered. The interaction with SNRNP200 stretch occupies residues R5 to V58. Phosphoserine occurs at positions 15 and 17. At Y147 the chain carries Phosphotyrosine. Basic and acidic residues predominate over residues L232–K283. The interval L232–Y289 is disordered. A Phosphothreonine modification is found at T253. A Phosphoserine modification is found at S261.

This sequence belongs to the TLS1 family. In terms of assembly, component of the spliceosome. Interacts with SNRNP200; the interaction is direct. Interacts with PRPF8.

Its subcellular location is the nucleus. It is found in the chromosome. It localises to the centromere. Functionally, plays a role in pre-mRNA splicing by promoting usage of the upstream 3'-splice site at alternative NAGNAG splice sites; these are sites featuring alternative acceptor motifs separated by only a few nucleotides. May also modulate exon inclusion events. Plays a role in spliceosomal remodeling by displacing WBP4 from SNRNP200 and may act to inhibit SNRNP200 helicase activity. Binds U5 snRNA. Required for proper chromosome segregation. Not required for splicing of shelterin components. The protein is Splicing factor C9orf78 (C9orf78) of Homo sapiens (Human).